Reading from the N-terminus, the 649-residue chain is 70 kDa protein (649 aa).

4 disordered regions span residues 28 to 80 (LRRG…DFSP), 257 to 286 (ALSL…AASD), 311 to 359 (TATS…SKQQ), and 458 to 550 (QSAE…PSSL). A compositionally biased stretch (polar residues) spans 268 to 279 (KSTSPCNNSQLP). The segment covering 330 to 349 (RLQRSLHLHSRSPHSSHFRP) has biased composition (basic residues). Positions 504–515 (DVSNSETKNCPS) are enriched in polar residues. Low complexity-rich tracts occupy residues 524–533 (PNHLHPLLPG) and 540–550 (PRQLSPSPSSL).

It belongs to the tymoviridae protein p69 family.

This Solanum lycopersicum (Tomato) protein is 70 kDa protein.